The chain runs to 527 residues: NAD(P)H-quinone oxidoreductase chain 4 1 (527 aa).

14 consecutive transmembrane segments (helical) span residues 5-25 (FPWL…LPII), 35-55 (WYSL…FCTG), 90-110 (LIIL…PVSF), 112-132 (PKLF…VFAV), 136-156 (LLFF…LSIW), 168-188 (FILY…TMAF), 211-231 (LLLY…FPLH), 242-262 (TAPA…YALL), 274-294 (AVFA…AALT), 310-330 (ISHM…GLSG), 331-351 (AVLQ…LVGA), 386-406 (LALP…GFAT), 416-436 (VLVI…LLSM), and 463-483 (VFII…PKIV).

The protein belongs to the complex I subunit 4 family.

The protein resides in the cellular thylakoid membrane. It carries out the reaction a plastoquinone + NADH + (n+1) H(+)(in) = a plastoquinol + NAD(+) + n H(+)(out). The enzyme catalyses a plastoquinone + NADPH + (n+1) H(+)(in) = a plastoquinol + NADP(+) + n H(+)(out). NDH-1 shuttles electrons from NAD(P)H, via FMN and iron-sulfur (Fe-S) centers, to quinones in the respiratory chain. The immediate electron acceptor for the enzyme in this species is believed to be plastoquinone. Couples the redox reaction to proton translocation (for every two electrons transferred, four hydrogen ions are translocated across the cytoplasmic membrane), and thus conserves the redox energy in a proton gradient. The chain is NAD(P)H-quinone oxidoreductase chain 4 1 from Trichodesmium erythraeum (strain IMS101).